The sequence spans 180 residues: Large ribosomal subunit protein uL6 (180 aa).

Belongs to the universal ribosomal protein uL6 family. As to quaternary structure, part of the 50S ribosomal subunit.

Functionally, this protein binds to the 23S rRNA, and is important in its secondary structure. It is located near the subunit interface in the base of the L7/L12 stalk, and near the tRNA binding site of the peptidyltransferase center. The protein is Large ribosomal subunit protein uL6 of Salinispora tropica (strain ATCC BAA-916 / DSM 44818 / JCM 13857 / NBRC 105044 / CNB-440).